Here is a 910-residue protein sequence, read N- to C-terminus: Schlafen family member 8 (910 aa).

The tract at residues 1-354 (METHPSLAVK…WVRMMVDFGP (354 aa)) is n'-domain region. Residues Glu-205 and Glu-210 contribute to the active site. 3 residues coordinate Zn(2+): His-280, Cys-282, and Cys-319. An ATP-binding site is contributed by 599–606 (GLPGSGKT).

This sequence belongs to the Schlafen family. Subgroup III subfamily. Mg(2+) serves as cofactor. As to expression, in T-cells, expressed at relatively constant levels during development: expressed in immature CD3(-)CD4(-)CD8(-) T-cells (DN stage), in CD4(+)CD8(+) double-positive stage (DP) and mature CD4(+) or CD8(+) thymocytes. Expression is slightly reduced at the DP stage.

Its subcellular location is the cytoplasm. Endoribonuclease that cleaves tRNAs and rRNAs. Cleaves tRNAs 11 nucleotides from the 3'-terminus at the acceptor stem. May be involved in immune system via regulation of inflammation. The polypeptide is Schlafen family member 8 (Mus musculus (Mouse)).